The chain runs to 429 residues: Septin-8 (429 aa).

The span at 1 to 16 shows a compositional bias: basic and acidic residues; that stretch reads MAATDLERVSNAEPEP. The interval 1–23 is disordered; it reads MAATDLERVSNAEPEPRSLSLGG. Alanine 2 carries the N-acetylalanine modification. Serine 10 carries the post-translational modification Phosphoserine. One can recognise a Septin-type G domain in the interval 41–307; it reads QGFSFNILCV…ELYRRCKLEE (267 aa). A G1 motif region spans residues 51–58; it reads GETGIGKS. Residues 51–58, glycine 106, 187–195, glycine 241, and arginine 256 contribute to the GTP site; these read GETGIGKS and KADTISKSE. Residues 103 to 106 are G3 motif; that stretch reads DAVG. The tract at residues 186 to 189 is G4 motif; the sequence is AKAD. Residues 320-412 adopt a coiled-coil conformation; it reads FSLQETYEAK…AAMEALQSQA (93 aa). The span at 409–420 shows a compositional bias: polar residues; that stretch reads QSQALHATSQQP. Positions 409–429 are disordered; the sequence is QSQALHATSQQPLRKDKDKKN.

The protein belongs to the TRAFAC class TrmE-Era-EngA-EngB-Septin-like GTPase superfamily. Septin GTPase family. As to quaternary structure, septins polymerize into heterooligomeric protein complexes that form filaments, and can associate with cellular membranes, actin filaments and microtubules. GTPase activity is required for filament formation. Interacts with SEPTIN5. Interacts with CDK14, SEPTIN4 and SEPTIN7. Interacts with VAMP2; the interaction inhibits interaction of VAMP2 with SYP. Interacts with STX1A.

It localises to the cytoplasm. The protein localises to the cytoskeleton. It is found in the synapse. Its subcellular location is the cell projection. The protein resides in the axon. It localises to the cytoplasmic vesicle. The protein localises to the secretory vesicle. It is found in the synaptic vesicle membrane. Its subcellular location is the presynapse. Functionally, filament-forming cytoskeletal GTPase. May play a role in platelet secretion. Seems to participate in the process of SNARE complex formation in synaptic vesicles. This is Septin-8 from Mus musculus (Mouse).